The sequence spans 227 residues: PKHD-type hydroxylase Reut_B4660 (227 aa).

In terms of domain architecture, Fe2OG dioxygenase spans 78–178 (KVFPPLFNRY…RVSSFFWIQS (101 aa)). Positions 96, 98, and 159 each coordinate Fe cation. Residue R169 coordinates 2-oxoglutarate.

Requires Fe(2+) as cofactor. The cofactor is L-ascorbate.

The chain is PKHD-type hydroxylase Reut_B4660 from Cupriavidus pinatubonensis (strain JMP 134 / LMG 1197) (Cupriavidus necator (strain JMP 134)).